Consider the following 272-residue polypeptide: MYSFNDTLGYHAPLDVNNLPDDKTAITIENLDLHYGQSQALYDISMRIPKGRVTAFIGPSGCGKSTLLRCINRMNDLVEGCKVTGSVKLYGSNVYDPSVDVATLRRRVGMVFQRPNPFPKSIYENVVYGLRLQGVKNSRTLDDAVERSLRSAALWDEVKDRLHENAFGLSGGQQQRLVIARAVAIEPEVLLLDEPTSALDPISTLTIEELINDLKTQYTVVIVTHNMQQAARVSDYTAFIHMGKLIEYSDADTIFTSPMKKQTEDYITGRYG.

One can recognise an ABC transporter domain in the interval 26-267 (ITIENLDLHY…PMKKQTEDYI (242 aa)). Residue 58–65 (GPSGCGKS) participates in ATP binding.

It belongs to the ABC transporter superfamily. Phosphate importer (TC 3.A.1.7) family. In terms of assembly, the complex is composed of two ATP-binding proteins (PstB), two transmembrane proteins (PstC and PstA) and a solute-binding protein (PstS).

It localises to the cell inner membrane. The catalysed reaction is phosphate(out) + ATP + H2O = ADP + 2 phosphate(in) + H(+). Part of the ABC transporter complex PstSACB involved in phosphate import. Responsible for energy coupling to the transport system. The polypeptide is Phosphate import ATP-binding protein PstB 1 (Vibrio vulnificus (strain YJ016)).